We begin with the raw amino-acid sequence, 242 residues long: Probable transcriptional regulatory protein NMB1648 (242 aa).

Belongs to the TACO1 family.

It is found in the cytoplasm. This chain is Probable transcriptional regulatory protein NMB1648, found in Neisseria meningitidis serogroup B (strain ATCC BAA-335 / MC58).